The following is a 425-amino-acid chain: Trigger factor (425 aa).

Residues 163–248 enclose the PPIase FKBP-type domain; it reads GDTAVIDFEG…VHEIKTKELP (86 aa).

This sequence belongs to the FKBP-type PPIase family. Tig subfamily.

The protein localises to the cytoplasm. The catalysed reaction is [protein]-peptidylproline (omega=180) = [protein]-peptidylproline (omega=0). Functionally, involved in protein export. Acts as a chaperone by maintaining the newly synthesized protein in an open conformation. Functions as a peptidyl-prolyl cis-trans isomerase. This is Trigger factor from Bacillus cereus (strain Q1).